We begin with the raw amino-acid sequence, 401 residues long: Glucose-6-phosphate isomerase (401 aa).

The active-site Proton donor is the Glu261. Catalysis depends on residues His282 and Lys392.

The protein belongs to the GPI family. In terms of assembly, homodimer.

It is found in the cytoplasm. It catalyses the reaction alpha-D-glucose 6-phosphate = beta-D-fructose 6-phosphate. It participates in carbohydrate biosynthesis; gluconeogenesis. Its pathway is carbohydrate degradation; glycolysis; D-glyceraldehyde 3-phosphate and glycerone phosphate from D-glucose: step 2/4. Competively inhibited by 6-phosphogluconate and erythrose 4-phosphate. In terms of biological role, catalyzes the isomerization of glucose-6-P to fructose-6-P. In Methanocaldococcus jannaschii (strain ATCC 43067 / DSM 2661 / JAL-1 / JCM 10045 / NBRC 100440) (Methanococcus jannaschii), this protein is Glucose-6-phosphate isomerase.